Here is a 610-residue protein sequence, read N- to C-terminus: UvrABC system protein C (610 aa).

A GIY-YIG domain is found at 16 to 94 (SQPGVYSMYD…IKLYQPRYNV (79 aa)). Residues 204–239 (QQVLNQLVERMELASRALNFEDAAHARDQIQAVRRV) form the UVR domain.

This sequence belongs to the UvrC family. Interacts with UvrB in an incision complex.

It is found in the cytoplasm. Its function is as follows. The UvrABC repair system catalyzes the recognition and processing of DNA lesions. UvrC both incises the 5' and 3' sides of the lesion. The N-terminal half is responsible for the 3' incision and the C-terminal half is responsible for the 5' incision. In Sodalis glossinidius (strain morsitans), this protein is UvrABC system protein C.